Here is a 229-residue protein sequence, read N- to C-terminus: uncharacterized protein (229 aa).

The next 7 membrane-spanning stretches (helical) occupy residues 21 to 41, 56 to 76, 83 to 103, 109 to 129, 141 to 161, 162 to 182, and 202 to 222; these read IYSL…LMLY, MIYY…SGAA, ALPI…FIIV, TVFQ…IIGV, AMFA…FIGS, GMMS…LIAS, and WAVA…ISLL.

The protein belongs to the BI1 family.

It is found in the cell membrane. This is an uncharacterized protein from Streptococcus pyogenes serotype M6 (strain ATCC BAA-946 / MGAS10394).